The primary structure comprises 555 residues: Dihydroxy-acid dehydratase (555 aa).

Asp78 provides a ligand contact to Mg(2+). Cys119 provides a ligand contact to [2Fe-2S] cluster. Residues Asp120 and Lys121 each coordinate Mg(2+). Lys121 bears the N6-carboxylysine mark. Cys191 contributes to the [2Fe-2S] cluster binding site. Glu444 provides a ligand contact to Mg(2+). The active-site Proton acceptor is the Ser470.

It belongs to the IlvD/Edd family. As to quaternary structure, homodimer. It depends on [2Fe-2S] cluster as a cofactor. Mg(2+) serves as cofactor.

It catalyses the reaction (2R)-2,3-dihydroxy-3-methylbutanoate = 3-methyl-2-oxobutanoate + H2O. It carries out the reaction (2R,3R)-2,3-dihydroxy-3-methylpentanoate = (S)-3-methyl-2-oxopentanoate + H2O. It functions in the pathway amino-acid biosynthesis; L-isoleucine biosynthesis; L-isoleucine from 2-oxobutanoate: step 3/4. The protein operates within amino-acid biosynthesis; L-valine biosynthesis; L-valine from pyruvate: step 3/4. Functions in the biosynthesis of branched-chain amino acids. Catalyzes the dehydration of (2R,3R)-2,3-dihydroxy-3-methylpentanoate (2,3-dihydroxy-3-methylvalerate) into 2-oxo-3-methylpentanoate (2-oxo-3-methylvalerate) and of (2R)-2,3-dihydroxy-3-methylbutanoate (2,3-dihydroxyisovalerate) into 2-oxo-3-methylbutanoate (2-oxoisovalerate), the penultimate precursor to L-isoleucine and L-valine, respectively. The polypeptide is Dihydroxy-acid dehydratase (Maridesulfovibrio salexigens (strain ATCC 14822 / DSM 2638 / NCIMB 8403 / VKM B-1763) (Desulfovibrio salexigens)).